Here is a 315-residue protein sequence, read N- to C-terminus: GPN-loop GTPase 2 (315 aa).

Gly12–Thr17 lines the GTP pocket. A Gly-Pro-Asn (GPN)-loop; involved in dimer interface motif is present at residues Gly69–Asn71. Position 172–175 (Ser172–Asp175) interacts with GTP.

The protein belongs to the GPN-loop GTPase family. As to quaternary structure, heterodimers with gpn1 or fet5/gpn3. Binds to RNA polymerase II (RNAPII).

The protein localises to the cytoplasm. Its subcellular location is the nucleus. Functionally, small GTPase required for proper nuclear import of RNA polymerase II and III (RNAPII and RNAPIII). May act at an RNAP assembly step prior to nuclear import. In Schizosaccharomyces pombe (strain 972 / ATCC 24843) (Fission yeast), this protein is GPN-loop GTPase 2.